A 285-amino-acid polypeptide reads, in one-letter code: MEFWFSELHSPHVKFDIRVEKQLFSGESDYQRIDVFQSPEFGKFLTLNGSVIFSEQDCFIYNEMVVHVPMSVHPDVKNVLIIGGGDGGVSKELLQYDNIENIDIVEQDNMFVDVCREYFPETASGLEDERVHIYNSDALRFLRSKQDMYDLIINDATDPFGASEGLFTREFYGNCYKALKEDGILVYQHGSPFYDEDEDACRSMHRKVFHTFPISRVYQAHIPTSPSGYWLFGFASKKYHPLKDFKPAEWKRRNIHTEYYTTNLHTGAFMLPKYVEELLEQEEER.

Positions 2 to 237 (EFWFSELHSP…GYWLFGFASK (236 aa)) constitute a PABS domain. Q31 is an S-methyl-5'-thioadenosine binding site. D86 lines the spermidine pocket. S-methyl-5'-thioadenosine-binding positions include E106 and 137-138 (DA). D155 functions as the Proton acceptor in the catalytic mechanism.

This sequence belongs to the spermidine/spermine synthase family. In terms of assembly, homodimer or homotetramer.

It localises to the cytoplasm. It catalyses the reaction S-adenosyl 3-(methylsulfanyl)propylamine + putrescine = S-methyl-5'-thioadenosine + spermidine + H(+). It functions in the pathway amine and polyamine biosynthesis; spermidine biosynthesis; spermidine from putrescine: step 1/1. In terms of biological role, catalyzes the irreversible transfer of a propylamine group from the amino donor S-adenosylmethioninamine (decarboxy-AdoMet) to putrescine (1,4-diaminobutane) to yield spermidine. This chain is Polyamine aminopropyltransferase, found in Lachnospira eligens (strain ATCC 27750 / DSM 3376 / VPI C15-48 / C15-B4) (Eubacterium eligens).